Consider the following 351-residue polypeptide: Protein arginine N-methyltransferase 1 (351 aa).

Positions 30–331 constitute an SAM-dependent MTase PRMT-type domain; that stretch reads KDYYFDSYAH…KNNRDLDFTV (302 aa). The S-adenosyl-L-methionine site is built by histidine 43, arginine 52, glycine 76, glutamate 98, and glutamate 127. Catalysis depends on residues glutamate 142 and glutamate 151.

Belongs to the class I-like SAM-binding methyltransferase superfamily. Protein arginine N-methyltransferase family. As to quaternary structure, homodimer. Homooctamer; individual homodimers associates to form a homooctamer and homooligomerization is required for proper localization to the cell membrane. Individual homodimers can associate to form a homohexamer. Component of a complex with lsm14a/rap55a. Interacts with cirbp.

The protein localises to the nucleus. It is found in the nucleoplasm. Its subcellular location is the cytoplasm. The protein resides in the cytosol. The catalysed reaction is L-arginyl-[protein] + 2 S-adenosyl-L-methionine = N(omega),N(omega)-dimethyl-L-arginyl-[protein] + 2 S-adenosyl-L-homocysteine + 2 H(+). It catalyses the reaction L-arginyl-[protein] + S-adenosyl-L-methionine = N(omega)-methyl-L-arginyl-[protein] + S-adenosyl-L-homocysteine + H(+). It carries out the reaction N(omega)-methyl-L-arginyl-[protein] + S-adenosyl-L-methionine = N(omega),N(omega)-dimethyl-L-arginyl-[protein] + S-adenosyl-L-homocysteine + H(+). Functionally, arginine methyltransferase that methylates (mono and asymmetric dimethylation) the guanidino nitrogens of arginyl residues present in target proteins. Constitutes the main enzyme that mediates monomethylation and asymmetric dimethylation of histone H4 'Arg-3' (H4R3me1 and H4R3me2a, respectively), a specific tag for epigenetic transcriptional activation. Methylates ilf3 to regulate its DNA-binding activity. Required for neural induction, playing a key role in the control of epidermal versus neural cell fate choice. Methylates cirbp to regulate its subcellular location. Acts transiently during metamorphosis as a transcription coactivator, enhancing thyroid hormone (T3) receptor (TR)-mediated transcription by enhancing TR binding to the T3 response element (TRE), and histone modification through recruitment of other coactivators. This Xenopus tropicalis (Western clawed frog) protein is Protein arginine N-methyltransferase 1.